A 180-amino-acid chain; its full sequence is ATP synthase subunit b, chloroplastic (180 aa).

The helical transmembrane segment at 28–48 threads the bilayer; it reads VTTLINIGVVLCLLIIFGKGF.

This sequence belongs to the ATPase B chain family. In terms of assembly, F-type ATPases have 2 components, F(1) - the catalytic core - and F(0) - the membrane proton channel. F(1) has five subunits: alpha(3), beta(3), gamma(1), delta(1), epsilon(1). F(0) has four main subunits: a(1), b(1), b'(1) and c(10-14). The alpha and beta chains form an alternating ring which encloses part of the gamma chain. F(1) is attached to F(0) by a central stalk formed by the gamma and epsilon chains, while a peripheral stalk is formed by the delta, b and b' chains.

Its subcellular location is the plastid. It localises to the chloroplast thylakoid membrane. Functionally, f(1)F(0) ATP synthase produces ATP from ADP in the presence of a proton or sodium gradient. F-type ATPases consist of two structural domains, F(1) containing the extramembraneous catalytic core and F(0) containing the membrane proton channel, linked together by a central stalk and a peripheral stalk. During catalysis, ATP synthesis in the catalytic domain of F(1) is coupled via a rotary mechanism of the central stalk subunits to proton translocation. Its function is as follows. Component of the F(0) channel, it forms part of the peripheral stalk, linking F(1) to F(0). The chain is ATP synthase subunit b, chloroplastic from Cuscuta obtusiflora (Peruvian dodder).